A 731-amino-acid chain; its full sequence is MSRRDKMIAKIKELMYKPEYIRNIGICAHIDHGKTTLSDNLLAGAGLISEDLAGEALGMDTKKDEQERGITIDAANASMVQEYEGEQYLINLIDTPGHVDFGGDVTRAMRAVDGAVVVVCAVDGVMPQTETVLKQALRENVKPVLFINKVDRLINELKLGPEELLKQLTSIIVEVNALIKSLAPKDKKNEWMVNVEEGSVAFGSAFKNWAINIPKMQETKFTFKDIIDYCNEGKEDELKQLLPLTEVLLNMVVKHLPSPNVAQVYRVPKIWDGDIESEVGQTMIKMSPDGPLAGMITNVAVDKHAGIVATCRIYGGTLEKSSEIYLVGSHGKARVQQAGIFMGAETIDTGKVPVGNIAYLTGVKGASAGETICSADCIIDEFEPIDHISEPVVTVAVEAKNTKDLPKLIEVLRQVSKEDPTIKVEINETTGEQLISGMGELHLEVVTNRIINDKKLEILVSEPIIVYKESVLGHSPVIEGKSPNKHNRFYIDVQPLDKPLYDALIEGDLKEGRIKTKETAQDFIELGMDKEEARRVWDVYNRSMFINMTRGIQYLDEVKELLLEGFEAALKDGPLANEEAVGLKFILSDAKLHEDAVHRGPAQVLPAIKKAIYASIMSANPCLLEPIQKVFISAPLEYMGNCNKDIQNRRGRIIGQETKGVIAEMDFEVPIAKMFGFAGDIRSATGGKGDFSTEMKGFETLPIYLQDDIVRQIRTRKGLSPEPYGPEHYSA.

Residues 19–234 (EYIRNIGICA…DIIDYCNEGK (216 aa)) enclose the tr-type G domain. Residues 28-35 (AHIDHGKT), 94-98 (DTPGH), and 148-151 (NKVD) contribute to the GTP site. His598 carries the post-translational modification Diphthamide.

The protein belongs to the TRAFAC class translation factor GTPase superfamily. Classic translation factor GTPase family. EF-G/EF-2 subfamily.

It localises to the cytoplasm. Its function is as follows. Catalyzes the GTP-dependent ribosomal translocation step during translation elongation. During this step, the ribosome changes from the pre-translocational (PRE) to the post-translocational (POST) state as the newly formed A-site-bound peptidyl-tRNA and P-site-bound deacylated tRNA move to the P and E sites, respectively. Catalyzes the coordinated movement of the two tRNA molecules, the mRNA and conformational changes in the ribosome. The sequence is that of Elongation factor 2 from Methanobrevibacter ruminantium (strain ATCC 35063 / DSM 1093 / JCM 13430 / OCM 146 / M1) (Methanobacterium ruminantium).